Here is a 302-residue protein sequence, read N- to C-terminus: Sulfate adenylyltransferase subunit 2 (302 aa).

This sequence belongs to the PAPS reductase family. CysD subfamily. Heterodimer composed of CysD, the smaller subunit, and CysN.

It carries out the reaction sulfate + ATP + H(+) = adenosine 5'-phosphosulfate + diphosphate. It participates in sulfur metabolism; hydrogen sulfide biosynthesis; sulfite from sulfate: step 1/3. With CysN forms the ATP sulfurylase (ATPS) that catalyzes the adenylation of sulfate producing adenosine 5'-phosphosulfate (APS) and diphosphate, the first enzymatic step in sulfur assimilation pathway. APS synthesis involves the formation of a high-energy phosphoric-sulfuric acid anhydride bond driven by GTP hydrolysis by CysN coupled to ATP hydrolysis by CysD. The polypeptide is Sulfate adenylyltransferase subunit 2 (Zymomonas mobilis subsp. mobilis (strain ATCC 31821 / ZM4 / CP4)).